A 432-amino-acid chain; its full sequence is Glucose-6-phosphate isomerase (432 aa).

The active-site Proton donor is Glu-283. Catalysis depends on residues His-304 and Lys-418.

The protein belongs to the GPI family.

It is found in the cytoplasm. It catalyses the reaction alpha-D-glucose 6-phosphate = beta-D-fructose 6-phosphate. It participates in carbohydrate biosynthesis; gluconeogenesis. The protein operates within carbohydrate degradation; glycolysis; D-glyceraldehyde 3-phosphate and glycerone phosphate from D-glucose: step 2/4. In terms of biological role, catalyzes the reversible isomerization of glucose-6-phosphate to fructose-6-phosphate. The protein is Glucose-6-phosphate isomerase of Rubrobacter xylanophilus (strain DSM 9941 / JCM 11954 / NBRC 16129 / PRD-1).